The chain runs to 220 residues: Aspartic protease inhibitor 4 (220 aa).

The N-terminal stretch at 1 to 23 is a signal peptide; that stretch reads MMKCLFLLCLCLLPILVFSSTFT. A propeptide spanning residues 24-32 is cleaved from the precursor; the sequence is SQNPINLPS. Residues 26–31 carry the Vacuolar targeting signal motif; sequence NPINLP. Asn-51 carries an N-linked (GlcNAc...) asparagine glycan. Cystine bridges form between Cys-80/Cys-125 and Cys-174/Cys-185.

It belongs to the protease inhibitor I3 (leguminous Kunitz-type inhibitor) family. Tubers.

It localises to the vacuole. Inhibits tightly cathepsin D (aspartic protease) and weakly trypsin (serine protease). May protect the plant by inhibiting proteases of invading organisms. This Solanum tuberosum (Potato) protein is Aspartic protease inhibitor 4.